Consider the following 193-residue polypeptide: Interferon epsilon (193 aa).

Positions 1–21 are cleaved as a signal peptide; the sequence is MINKSFFEIMLVLLASSTGFS. A disulfide bridge links Cys53 with Cys163. Asn139 is a glycosylation site (N-linked (GlcNAc...) asparagine).

Belongs to the alpha/beta interferon family.

It is found in the secreted. Its function is as follows. Type I interferon required for maintaining basal levels of IFN-regulated genes, including 2'-5'-oligoadenylate synthetase, IRF7 and ISG15, in the female reproductive tract. Directly mediates protection against viral and bacterial genital infections. The protein is Interferon epsilon (IFNE) of Sus scrofa (Pig).